A 166-amino-acid chain; its full sequence is Protein SprT (166 aa).

The 146-residue stretch at 19 to 164 (REHLAKANLK…CVHCGDLLVA (146 aa)) folds into the SprT-like domain. H78 provides a ligand contact to Zn(2+). E79 is an active-site residue. Zn(2+) is bound at residue H82.

It belongs to the SprT family. Zn(2+) is required as a cofactor.

It localises to the cytoplasm. This Klebsiella pneumoniae (strain 342) protein is Protein SprT.